A 180-amino-acid polypeptide reads, in one-letter code: ATP synthase subunit b, plastid (180 aa).

A helical transmembrane segment spans residues 27-49 (LVTTLINIAVVLSLLIVFGKGFL).

This sequence belongs to the ATPase B chain family. As to quaternary structure, F-type ATPases have 2 components, F(1) - the catalytic core - and F(0) - the membrane proton channel. F(1) has five subunits: alpha(3), beta(3), gamma(1), delta(1), epsilon(1). F(0) has four main subunits: a(1), b(1), b'(1) and c(10-14). The alpha and beta chains form an alternating ring which encloses part of the gamma chain. F(1) is attached to F(0) by a central stalk formed by the gamma and epsilon chains, while a peripheral stalk is formed by the delta, b and b' chains.

It is found in the plastid membrane. Functionally, f(1)F(0) ATP synthase produces ATP from ADP in the presence of a proton or sodium gradient. F-type ATPases consist of two structural domains, F(1) containing the extramembraneous catalytic core and F(0) containing the membrane proton channel, linked together by a central stalk and a peripheral stalk. During catalysis, ATP synthesis in the catalytic domain of F(1) is coupled via a rotary mechanism of the central stalk subunits to proton translocation. Its function is as follows. Component of the F(0) channel, it forms part of the peripheral stalk, linking F(1) to F(0). The chain is ATP synthase subunit b, plastid from Cuscuta gronovii (Common dodder).